Consider the following 563-residue polypeptide: Lipoprotein LpqB (563 aa).

The N-terminal stretch at 1 to 19 is a signal peptide; sequence MRRMKALTAAMTAALLVSG. C20 carries N-palmitoyl cysteine lipidation. A lipid anchor (S-diacylglycerol cysteine) is attached at C20.

The protein belongs to the LpqB lipoprotein family.

Its subcellular location is the cell membrane. The chain is Lipoprotein LpqB from Corynebacterium efficiens (strain DSM 44549 / YS-314 / AJ 12310 / JCM 11189 / NBRC 100395).